The chain runs to 349 residues: Protein-glutamate methylesterase/protein-glutamine glutaminase (349 aa).

In terms of domain architecture, Response regulatory spans 5–122 (RVLSVDDSAL…REGMLAYSEM (118 aa)). Residue Asp-56 is modified to 4-aspartylphosphate. Residues 152–344 (LLSSEKLIAI…QQMLAKISAG (193 aa)) enclose the CheB-type methylesterase domain. Residues Ser-164, His-190, and Asp-286 contribute to the active site.

Belongs to the CheB family. Phosphorylated by CheA. Phosphorylation of the N-terminal regulatory domain activates the methylesterase activity.

It is found in the cytoplasm. It carries out the reaction [protein]-L-glutamate 5-O-methyl ester + H2O = L-glutamyl-[protein] + methanol + H(+). The catalysed reaction is L-glutaminyl-[protein] + H2O = L-glutamyl-[protein] + NH4(+). In terms of biological role, involved in chemotaxis. Part of a chemotaxis signal transduction system that modulates chemotaxis in response to various stimuli. Catalyzes the demethylation of specific methylglutamate residues introduced into the chemoreceptors (methyl-accepting chemotaxis proteins or MCP) by CheR. Also mediates the irreversible deamidation of specific glutamine residues to glutamic acid. In Salmonella typhi, this protein is Protein-glutamate methylesterase/protein-glutamine glutaminase.